The following is a 103-amino-acid chain: 4-amino-4-deoxychorismate mutase (103 aa).

Positions methionine 1–methionine 92 constitute a Chorismate mutase domain.

It carries out the reaction 4-amino-4-deoxychorismate = 4-amino-4-deoxyprephenate. It participates in antibiotic biosynthesis. In terms of biological role, involved in chloramphenicol biosynthesis. Probably catalyzes the conversion of 4-amino-4-deoxychorismate to 4-amino-4-deoxyprephenate. In Streptomyces venezuelae (strain ATCC 10712 / CBS 650.69 / DSM 40230 / JCM 4526 / NBRC 13096 / PD 04745), this protein is 4-amino-4-deoxychorismate mutase.